Here is a 284-residue protein sequence, read N- to C-terminus: Diaminopimelate epimerase (284 aa).

The substrate site is built by asparagine 20, glutamine 53, and asparagine 73. The Proton donor role is filled by cysteine 82. Substrate-binding positions include glycine 83–asparagine 84, asparagine 167, asparagine 200, and glutamate 218–arginine 219. Cysteine 227 serves as the catalytic Proton acceptor. Substrate is bound at residue glycine 228–serine 229.

It belongs to the diaminopimelate epimerase family. Homodimer.

Its subcellular location is the cytoplasm. The catalysed reaction is (2S,6S)-2,6-diaminopimelate = meso-2,6-diaminopimelate. Its pathway is amino-acid biosynthesis; L-lysine biosynthesis via DAP pathway; DL-2,6-diaminopimelate from LL-2,6-diaminopimelate: step 1/1. Catalyzes the stereoinversion of LL-2,6-diaminopimelate (L,L-DAP) to meso-diaminopimelate (meso-DAP), a precursor of L-lysine and an essential component of the bacterial peptidoglycan. This is Diaminopimelate epimerase from Xylella fastidiosa (strain M23).